Here is a 623-residue protein sequence, read N- to C-terminus: Methionine--tRNA ligase (623 aa).

The short motif at 11–21 (PYANGPRHIGH) is the 'HIGH' region element. Zn(2+)-binding residues include Cys143, Cys146, Cys156, and Cys159. Residues 347–351 (KFSSS) carry the 'KMSKS' region motif. Residue Ser350 coordinates ATP.

This sequence belongs to the class-I aminoacyl-tRNA synthetase family. MetG type 1 subfamily. Monomer. Zn(2+) is required as a cofactor.

It localises to the cytoplasm. The catalysed reaction is tRNA(Met) + L-methionine + ATP = L-methionyl-tRNA(Met) + AMP + diphosphate. Is required not only for elongation of protein synthesis but also for the initiation of all mRNA translation through initiator tRNA(fMet) aminoacylation. This Bifidobacterium animalis subsp. lactis (strain AD011) protein is Methionine--tRNA ligase.